The following is a 291-amino-acid chain: N-acetylmannosamine kinase (291 aa).

ATP-binding positions include 5 to 12 (AVDIGGTK) and 132 to 139 (GVGGGIVV). The Zn(2+) site is built by His-156, Cys-166, Cys-168, and Cys-173.

It belongs to the ROK (NagC/XylR) family. NanK subfamily. In terms of assembly, homodimer.

The enzyme catalyses an N-acyl-D-mannosamine + ATP = an N-acyl-D-mannosamine 6-phosphate + ADP + H(+). The protein operates within amino-sugar metabolism; N-acetylneuraminate degradation; D-fructose 6-phosphate from N-acetylneuraminate: step 2/5. Functionally, catalyzes the phosphorylation of N-acetylmannosamine (ManNAc) to ManNAc-6-P. The chain is N-acetylmannosamine kinase (nanK2) from Escherichia coli O6:H1 (strain CFT073 / ATCC 700928 / UPEC).